We begin with the raw amino-acid sequence, 197 residues long: Putative WUSCHEL-related homeobox 10 (197 aa).

Positions 75–139 (STRPRWTPTT…NRRARSKRKQ (65 aa)) form a DNA-binding region, homeobox; WUS-type. The disordered stretch occupies residues 132 to 168 (RARSKRKQPPTTTITSSQADDAAVTTTEERGRCGDDS). Polar residues predominate over residues 140–150 (PPTTTITSSQA).

Belongs to the WUS homeobox family.

It localises to the nucleus. Potential transcription factor that plays a central role during developmental processes. This Arabidopsis thaliana (Mouse-ear cress) protein is Putative WUSCHEL-related homeobox 10 (WOX10).